The primary structure comprises 142 residues: UPF0306 protein Ent638_3591 (142 aa).

It belongs to the UPF0306 family.

In Enterobacter sp. (strain 638), this protein is UPF0306 protein Ent638_3591.